An 822-amino-acid chain; its full sequence is Fibroblast growth factor receptor 1 (822 aa).

The N-terminal stretch at 1–21 is a signal peptide; it reads MWGWRGLLFWAVLVTATLCTA. Residues 22 to 376 lie on the Extracellular side of the membrane; it reads RPAPTLPEQA…AVMTSPLYLE (355 aa). The region spanning 25 to 119 is the Ig-like C2-type 1 domain; the sequence is PTLPEQAQPW…DTTYFSVNVS (95 aa). A disulfide bond links C55 and C101. N-linked (GlcNAc...) asparagine glycosylation is found at N77 and N117. The segment at 120–162 is disordered; that stretch reads DALPSSEDDDDDDDSSSEEKETDNTKPNRRPVAPYWTSPEKME. The segment covering 125–135 has biased composition (acidic residues); the sequence is SEDDDDDDDSS. Positions 136–145 are enriched in basic and acidic residues; it reads SEEKETDNTK. Ig-like C2-type domains lie at 158–246 and 255–357; these read PEKM…YQLD and PILQ…AWLT. The heparin-binding stretch occupies residues 160-177; sequence KMEKKLHAVPAAKTVKFK. Residues C178 and C230 are joined by a disulfide bond. N-linked (GlcNAc...) asparagine glycans are attached at residues N227, N240, N264, N296, N317, and N330. A disulfide bridge links C277 with C341. The chain crosses the membrane as a helical span at residues 377 to 397; the sequence is IIIYCTGAFLISCMVGSVIIY. The Cytoplasmic portion of the chain corresponds to 398 to 822; the sequence is KMKSGTKKSD…QLANGGLNRR (425 aa). Y463 is modified (phosphotyrosine; by autocatalysis). Residues 478–767 form the Protein kinase domain; that stretch reads LVLGKPLGEG…VALTSNQEYL (290 aa). ATP contacts are provided by residues 484 to 490, K514, 562 to 564, and N568; these read LGEGCFG and EYA. Phosphotyrosine; by autocatalysis occurs at positions 583 and 585. The active-site Proton acceptor is D623. ATP-binding residues include R627 and D641. Phosphotyrosine; by autocatalysis is present on residues Y653, Y654, Y730, and Y766. The disordered stretch occupies residues 770–822; it reads SMPLDQDSPSFPDTRSSTCSSGEDSVFSHEPFPEEPCLPRHPTQLANGGLNRR. A compositionally biased stretch (polar residues) spans 776–792; the sequence is DSPSFPDTRSSTCSSGE.

It belongs to the protein kinase superfamily. Tyr protein kinase family. Fibroblast growth factor receptor subfamily. Monomer. Homodimer after ligand binding. Interacts predominantly with FGF1 and FGF2, but can also interact with FGF3, FGF4, FGF5, FGF6, FGF8, FGF10, FGF19, FGF21, FGF22 and FGF23 (in vitro). Ligand specificity is determined by tissue-specific expression of isoforms, and differences in the third Ig-like domain are crucial for ligand specificity. Affinity for fibroblast growth factors (FGFs) is increased by heparan sulfate glycosaminoglycans that function as coreceptors. Likewise, KLB increases the affinity for FGF19, FGF21 and FGF23. Interacts (phosphorylated on Tyr-766) with PLCG1 (via SH2 domains). Interacts with FRS2. Interacts (via C-terminus) with NEDD4 (via WW3 domain). Interacts with RPS6KA1. Interacts with KL. Interacts with SHB (via SH2 domain) and GRB10. Interacts with ANOS1; this interaction does not interfere with FGF2-binding to FGFR1, but prevents binding of heparin-bound FGF2. Interacts with SOX2 and SOX3. Interacts with FLRT1, FLRT2 and FLRT3. Found in a ternary complex with FGF1 and ITGAV:ITGB3. In terms of processing, autophosphorylated. Binding of FGF family members together with heparan sulfate proteoglycan or heparin promotes receptor dimerization and autophosphorylation on tyrosine residues. Autophosphorylation occurs in trans between the two FGFR molecules present in the dimer and proceeds in a highly ordered manner. Initial autophosphorylation at Tyr-653 increases the kinase activity by a factor of 50 to 100. After this, Tyr-583 becomes phosphorylated, followed by phosphorylation of Tyr-463, Tyr-766, Tyr-583 and Tyr-585. In a third stage, Tyr-654 is autophosphorylated, resulting in a further tenfold increase of kinase activity. Phosphotyrosine residues provide docking sites for interacting proteins and so are crucial for FGFR1 function and its regulation. Ubiquitinated. FGFR1 is rapidly ubiquitinated by NEDD4 after autophosphorylation, leading to internalization and lysosomal degradation. CBL is recruited to activated FGFR1 via FRS2 and GRB2, and mediates ubiquitination and subsequent degradation of FGFR1. Post-translationally, N-glycosylated in the endoplasmic reticulum. The N-glycan chains undergo further maturation to an Endo H-resistant form in the Golgi apparatus. As to expression, expressed in the parathyroid.

The protein localises to the cell membrane. The protein resides in the nucleus. It localises to the cytoplasm. Its subcellular location is the cytosol. It is found in the cytoplasmic vesicle. The catalysed reaction is L-tyrosyl-[protein] + ATP = O-phospho-L-tyrosyl-[protein] + ADP + H(+). With respect to regulation, present in an inactive conformation in the absence of bound ligand. Ligand binding leads to dimerization and activation by sequential autophosphorylation on tyrosine residues. Tyrosine-protein kinase that acts as a cell-surface receptor for fibroblast growth factors and plays an essential role in the regulation of embryonic development, cell proliferation, differentiation and migration. Required for normal mesoderm patterning and correct axial organization during embryonic development, normal skeletogenesis and normal development of the gonadotropin-releasing hormone (GnRH) neuronal system. Phosphorylates PLCG1, FRS2, GAB1 and SHB. Ligand binding leads to the activation of several signaling cascades. Activation of PLCG1 leads to the production of the cellular signaling molecules diacylglycerol and inositol 1,4,5-trisphosphate. Phosphorylation of FRS2 triggers recruitment of GRB2, GAB1, PIK3R1 and SOS1, and mediates activation of RAS, MAPK1/ERK2, MAPK3/ERK1 and the MAP kinase signaling pathway, as well as of the AKT1 signaling pathway. Promotes phosphorylation of SHC1, STAT1 and PTPN11/SHP2. In the nucleus, enhances RPS6KA1 and CREB1 activity and contributes to the regulation of transcription. FGFR1 signaling is down-regulated by IL17RD/SEF, and by FGFR1 ubiquitination, internalization and degradation. The protein is Fibroblast growth factor receptor 1 (Fgfr1) of Rattus norvegicus (Rat).